A 126-amino-acid polypeptide reads, in one-letter code: Holo-[acyl-carrier-protein] synthase (126 aa).

Mg(2+) contacts are provided by Asp9 and Glu58.

Belongs to the P-Pant transferase superfamily. AcpS family. The cofactor is Mg(2+).

It is found in the cytoplasm. It carries out the reaction apo-[ACP] + CoA = holo-[ACP] + adenosine 3',5'-bisphosphate + H(+). Transfers the 4'-phosphopantetheine moiety from coenzyme A to a Ser of acyl-carrier-protein. This chain is Holo-[acyl-carrier-protein] synthase, found in Vibrio parahaemolyticus serotype O3:K6 (strain RIMD 2210633).